Reading from the N-terminus, the 451-residue chain is MSRIFGTDGVRGLANGLLTAELAMELSQAAAIVLGHRHAPEGQRPTAVVARDGRASGEFIGAAVTAGLASSGVDVYDAGVLPTPAAAYLVGDIDADFGVMISASHNPAPDNGIKFLAHGGKKLPDAVEDTIQQVYEAKDFVRPTGAEVGRVTRLSDAEDRYILHLVGAIPHRLDGLSIVLDCANGAASGASPDAFRDAGATVHVIGAEPDGLNINDGVGSTHLGPLKQAVRELGADLGIAHDGDADRCLAVDHTGTEVDGDQIMCILAVAMKEAGRLNQDTLVATVMSNLGLQLALDEAGITLVRASVGDRYVLESMVANGYNLGGEQSGHVIMADYATTGDGLLTGLMLASRVAQTGMPLQELARTMTRMPQVMINVKNVDKAAAKTSEPVLEAVARTEERLGAEGRVLLRPSGTEPVVRVMVEAATHEDARREAEQLVSAVEEHLSLQS.

Catalysis depends on Ser-104, which acts as the Phosphoserine intermediate. Mg(2+) contacts are provided by Ser-104, Asp-242, Asp-244, and Asp-246. Residue Ser-104 is modified to Phosphoserine.

Belongs to the phosphohexose mutase family. Requires Mg(2+) as cofactor. Post-translationally, activated by phosphorylation.

It carries out the reaction alpha-D-glucosamine 1-phosphate = D-glucosamine 6-phosphate. Catalyzes the conversion of glucosamine-6-phosphate to glucosamine-1-phosphate. The protein is Phosphoglucosamine mutase of Kocuria rhizophila (strain ATCC 9341 / DSM 348 / NBRC 103217 / DC2201).